The chain runs to 542 residues: Glutamyl-tRNA(Gln) amidotransferase subunit A, mitochondrial (542 aa).

Residues Lys-55 and Ser-143 each act as charge relay system in the active site. Ser-167 serves as the catalytic Acyl-ester intermediate.

The protein belongs to the amidase family. GatA subfamily. In terms of assembly, subunit of the heterotrimeric GatCAB amidotransferase (AdT) complex, composed of A, B and C subunits.

It localises to the mitochondrion. The catalysed reaction is L-glutamyl-tRNA(Gln) + L-glutamine + ATP + H2O = L-glutaminyl-tRNA(Gln) + L-glutamate + ADP + phosphate + H(+). Functionally, allows the formation of correctly charged Gln-tRNA(Gln) through the transamidation of misacylated Glu-tRNA(Gln) in the mitochondria. The reaction takes place in the presence of glutamine and ATP through an activated gamma-phospho-Glu-tRNA(Gln). The sequence is that of Glutamyl-tRNA(Gln) amidotransferase subunit A, mitochondrial from Neurospora crassa (strain ATCC 24698 / 74-OR23-1A / CBS 708.71 / DSM 1257 / FGSC 987).